Here is an 863-residue protein sequence, read N- to C-terminus: DNA mismatch repair protein MutS (863 aa).

Residue 617 to 624 (GPNMGGKS) participates in ATP binding.

Belongs to the DNA mismatch repair MutS family.

In terms of biological role, this protein is involved in the repair of mismatches in DNA. It is possible that it carries out the mismatch recognition step. This protein has a weak ATPase activity. This Pseudomonas fluorescens (strain SBW25) protein is DNA mismatch repair protein MutS.